We begin with the raw amino-acid sequence, 20 residues long: Putative beta-neurotoxin (20 aa).

The LCN-type CS-alpha/beta domain maps to 1 to 20 (KDGYLVGSDGCKYSCLTRPG).

In terms of tissue distribution, expressed by the venom gland.

The protein resides in the secreted. Beta toxins bind voltage-independently at site-4 of sodium channels (Nav) and shift the voltage of activation toward more negative potentials thereby affecting sodium channel activation and promoting spontaneous and repetitive firing. The polypeptide is Putative beta-neurotoxin (Tityus pachyurus (Colombian scorpion)).